The following is a 267-amino-acid chain: 2-keto-3-deoxy-L-rhamnonate aldolase (267 aa).

H49 functions as the Proton acceptor in the catalytic mechanism. Residue Q151 participates in substrate binding. Position 153 (E153) interacts with Mg(2+). Positions 178 and 179 each coordinate substrate. D179 contributes to the Mg(2+) binding site.

Belongs to the HpcH/HpaI aldolase family. KDR aldolase subfamily. As to quaternary structure, homohexamer. The cofactor is Mg(2+).

The catalysed reaction is 2-dehydro-3-deoxy-L-rhamnonate = (S)-lactaldehyde + pyruvate. In terms of biological role, catalyzes the reversible retro-aldol cleavage of 2-keto-3-deoxy-L-rhamnonate (KDR) to pyruvate and lactaldehyde. The sequence is that of 2-keto-3-deoxy-L-rhamnonate aldolase from Salmonella dublin (strain CT_02021853).